The following is a 102-amino-acid chain: Large ribosomal subunit protein uL23c (102 aa).

Belongs to the universal ribosomal protein uL23 family. As to quaternary structure, part of the 50S ribosomal subunit.

Its subcellular location is the plastid. It is found in the chloroplast. Its function is as follows. Binds to 23S rRNA. This is Large ribosomal subunit protein uL23c (rpl23) from Trieres chinensis (Marine centric diatom).